A 1177-amino-acid polypeptide reads, in one-letter code: DNA-directed RNA polymerase subunit beta (1177 aa).

Residues 1147-1161 (DDTEIEMRDTEDDDD) show a composition bias toward acidic residues. The tract at residues 1147-1177 (DDTEIEMRDTEDDDDHQSADKLNVEVETTKE) is disordered. Residues 1162 to 1177 (HQSADKLNVEVETTKE) show a composition bias toward basic and acidic residues.

It belongs to the RNA polymerase beta chain family. The RNAP catalytic core consists of 2 alpha, 1 beta, 1 beta' and 1 omega subunit. When a sigma factor is associated with the core the holoenzyme is formed, which can initiate transcription.

It catalyses the reaction RNA(n) + a ribonucleoside 5'-triphosphate = RNA(n+1) + diphosphate. Its function is as follows. DNA-dependent RNA polymerase catalyzes the transcription of DNA into RNA using the four ribonucleoside triphosphates as substrates. The polypeptide is DNA-directed RNA polymerase subunit beta (Bacillus anthracis (strain A0248)).